Consider the following 376-residue polypeptide: Succinyl-diaminopimelate desuccinylase (376 aa).

Residue H67 participates in Zn(2+) binding. The active site involves D69. Residue D100 participates in Zn(2+) binding. E134 acts as the Proton acceptor in catalysis. Zn(2+) is bound by residues E135, E163, and H349.

Belongs to the peptidase M20A family. DapE subfamily. As to quaternary structure, homodimer. Requires Zn(2+) as cofactor. The cofactor is Co(2+).

The enzyme catalyses N-succinyl-(2S,6S)-2,6-diaminopimelate + H2O = (2S,6S)-2,6-diaminopimelate + succinate. Its pathway is amino-acid biosynthesis; L-lysine biosynthesis via DAP pathway; LL-2,6-diaminopimelate from (S)-tetrahydrodipicolinate (succinylase route): step 3/3. In terms of biological role, catalyzes the hydrolysis of N-succinyl-L,L-diaminopimelic acid (SDAP), forming succinate and LL-2,6-diaminopimelate (DAP), an intermediate involved in the bacterial biosynthesis of lysine and meso-diaminopimelic acid, an essential component of bacterial cell walls. This chain is Succinyl-diaminopimelate desuccinylase, found in Nitrosomonas europaea (strain ATCC 19718 / CIP 103999 / KCTC 2705 / NBRC 14298).